A 480-amino-acid polypeptide reads, in one-letter code: MNFETVIGLEVHVELNTNSKIFSPTSAHFGNDQNANTNVIDWSFPGVLPVLNKGVVDAGIKAALALNMDIHKKMHFDRKNYFYPDNPKAYQISQFDEPIGYNGWIEVELEDGTTKKIGIERAHLEEDAGKNTHGTDGYSYVDLNRQGVPLIEIVSEADMRSPEEAYAYLTALKEVIQYAGISDVKMEEGSMRVDANISLRPYGQEKFGTKTELKNLNSFSNVRKGLEYEVQRQAEILRSGGQIRQETRRYDEANKATILMRVKEGAADYRYFPEPDXPLFEIXDEWIEEMRTELPEFPKERRARYVSDLGLSDYDASQLTANKVTSDFFEKAVALDGDAKQVSNWLQGEVAQFLNAEGKTLEQIELTPENLVEMIAIIEDGTISSKIAKKVFVHLAKNGGGAREYVEKAGMVQISDPAILIPIIHQVFADNEAAVVDFKSGKRNADKAFTGFLMKATKGQANPQVALKLLAQELAKLKEN.

It belongs to the GatB/GatE family. GatB subfamily. As to quaternary structure, heterotrimer of A, B and C subunits.

It catalyses the reaction L-glutamyl-tRNA(Gln) + L-glutamine + ATP + H2O = L-glutaminyl-tRNA(Gln) + L-glutamate + ADP + phosphate + H(+). The catalysed reaction is L-aspartyl-tRNA(Asn) + L-glutamine + ATP + H2O = L-asparaginyl-tRNA(Asn) + L-glutamate + ADP + phosphate + 2 H(+). Functionally, allows the formation of correctly charged Asn-tRNA(Asn) or Gln-tRNA(Gln) through the transamidation of misacylated Asp-tRNA(Asn) or Glu-tRNA(Gln) in organisms which lack either or both of asparaginyl-tRNA or glutaminyl-tRNA synthetases. The reaction takes place in the presence of glutamine and ATP through an activated phospho-Asp-tRNA(Asn) or phospho-Glu-tRNA(Gln). The protein is Aspartyl/glutamyl-tRNA(Asn/Gln) amidotransferase subunit B of Streptococcus pneumoniae serotype 19F (strain G54).